The sequence spans 347 residues: GMP reductase (347 aa).

108–131 (ADFEKTVQILALNPALNFVCIDVA) lines the NADP(+) pocket. Glycine 181 and glycine 183 together coordinate K(+). Cysteine 186 acts as the Thioimidate intermediate in catalysis. Position 216-239 (216-239 (IVSDGGCTMPGDVAKAFGGGADFV)) interacts with NADP(+).

This sequence belongs to the IMPDH/GMPR family. GuaC type 1 subfamily. Homotetramer.

It catalyses the reaction IMP + NH4(+) + NADP(+) = GMP + NADPH + 2 H(+). Its function is as follows. Catalyzes the irreversible NADPH-dependent deamination of GMP to IMP. It functions in the conversion of nucleobase, nucleoside and nucleotide derivatives of G to A nucleotides, and in maintaining the intracellular balance of A and G nucleotides. In Salmonella paratyphi C (strain RKS4594), this protein is GMP reductase.